A 257-amino-acid chain; its full sequence is Undecaprenyl-diphosphatase (257 aa).

8 helical membrane passes run 4-24 (LFKA…PISS), 51-71 (HVGT…NIFF), 78-98 (LFII…HDLI), 106-126 (LIIV…EKVG), 133-153 (ITLS…IPGV), 171-191 (AYAA…AAML), 207-227 (LFII…KFLL), and 235-255 (LNLF…LYFF).

The protein belongs to the UppP family.

It localises to the cell inner membrane. The enzyme catalyses di-trans,octa-cis-undecaprenyl diphosphate + H2O = di-trans,octa-cis-undecaprenyl phosphate + phosphate + H(+). Functionally, catalyzes the dephosphorylation of undecaprenyl diphosphate (UPP). Confers resistance to bacitracin. This Thermodesulfovibrio yellowstonii (strain ATCC 51303 / DSM 11347 / YP87) protein is Undecaprenyl-diphosphatase.